Here is a 368-residue protein sequence, read N- to C-terminus: DNA replication and repair protein RecF (368 aa).

Residue 30-37 coordinates ATP; it reads GDNGAGKT.

The protein belongs to the RecF family.

Its subcellular location is the cytoplasm. Its function is as follows. The RecF protein is involved in DNA metabolism; it is required for DNA replication and normal SOS inducibility. RecF binds preferentially to single-stranded, linear DNA. It also seems to bind ATP. This Xanthomonas campestris pv. campestris (strain 8004) protein is DNA replication and repair protein RecF.